Reading from the N-terminus, the 316-residue chain is MSLFDWFANRQKTEPKVQQQQEREIADGLWTKCPNCGVLAYTKDLLANQLVCLDCGHHNRVESEERIRQLVDANTWNCLDEQIRPTDPLKFRDRKSYSDRLRETQEKTGLTDAVRTGTGTIDGLPLALGVMDFRFMGGSMGSVVGEKLCRLTEQATDESLPLVIICASGGARMQEGMLSLMQMAKISGALNRHREAKLLYIPVLTNPTTGGVTASFAMLGDIIIAEPKATIGFAGKRVIEQTLREKLPEGFQTSEYLLKHGFVDAIVPRTHLKKTLAQLISLHQPFFPLLSPLNSHHHYGQPELIPLKTAQGQTTV.

Residues 29 to 298 (LWTKCPNCGV…LLSPLNSHHH (270 aa)) form the CoA carboxyltransferase N-terminal domain. Zn(2+) contacts are provided by C33, C36, C52, and C55. The C4-type zinc-finger motif lies at 33 to 55 (CPNCGVLAYTKDLLANQLVCLDC).

The protein belongs to the AccD/PCCB family. As to quaternary structure, acetyl-CoA carboxylase is a heterohexamer composed of biotin carboxyl carrier protein (AccB), biotin carboxylase (AccC) and two subunits each of ACCase subunit alpha (AccA) and ACCase subunit beta (AccD). The cofactor is Zn(2+).

It localises to the cytoplasm. The catalysed reaction is N(6)-carboxybiotinyl-L-lysyl-[protein] + acetyl-CoA = N(6)-biotinyl-L-lysyl-[protein] + malonyl-CoA. It participates in lipid metabolism; malonyl-CoA biosynthesis; malonyl-CoA from acetyl-CoA: step 1/1. Functionally, component of the acetyl coenzyme A carboxylase (ACC) complex. Biotin carboxylase (BC) catalyzes the carboxylation of biotin on its carrier protein (BCCP) and then the CO(2) group is transferred by the transcarboxylase to acetyl-CoA to form malonyl-CoA. The sequence is that of Acetyl-coenzyme A carboxylase carboxyl transferase subunit beta from Microcystis aeruginosa (strain NIES-843 / IAM M-2473).